A 235-amino-acid chain; its full sequence is Small ribosomal subunit protein eS4 (235 aa).

An S4 RNA-binding domain is found at 38–99 (VTLLSIIRDY…GESYRVVYND (62 aa)).

The protein belongs to the eukaryotic ribosomal protein eS4 family.

The polypeptide is Small ribosomal subunit protein eS4 (rps4e) (Thermoplasma acidophilum (strain ATCC 25905 / DSM 1728 / JCM 9062 / NBRC 15155 / AMRC-C165)).